The sequence spans 172 residues: MVDKRESYTKEDLLASGRGELFGTKGPQLPAPNMLMMDRVVKMTETGGNFDKGYVEAELDINPDLWFFGCHFIGDPVMPGCLGLDAMWQLVGFYLGWLGGEGKGRALGVGEVKFTGQVLPTAKKVTYRIHFKRIVNRRLIMGLADGEVLVDGRLIYTASDLKVGLFQDTSAF.

The active site involves H71.

This sequence belongs to the thioester dehydratase family. FabA subfamily. Homodimer.

It is found in the cytoplasm. It carries out the reaction a (3R)-hydroxyacyl-[ACP] = a (2E)-enoyl-[ACP] + H2O. It catalyses the reaction (3R)-hydroxydecanoyl-[ACP] = (2E)-decenoyl-[ACP] + H2O. The catalysed reaction is (2E)-decenoyl-[ACP] = (3Z)-decenoyl-[ACP]. The protein operates within lipid metabolism; fatty acid biosynthesis. Its function is as follows. Necessary for the introduction of cis unsaturation into fatty acids. Catalyzes the dehydration of (3R)-3-hydroxydecanoyl-ACP to E-(2)-decenoyl-ACP and then its isomerization to Z-(3)-decenoyl-ACP. Can catalyze the dehydratase reaction for beta-hydroxyacyl-ACPs with saturated chain lengths up to 16:0, being most active on intermediate chain length. The polypeptide is 3-hydroxydecanoyl-[acyl-carrier-protein] dehydratase (Escherichia coli (strain SE11)).